A 441-amino-acid polypeptide reads, in one-letter code: Gamma-glutamyl phosphate reductase (441 aa).

Belongs to the gamma-glutamyl phosphate reductase family.

It localises to the cytoplasm. The catalysed reaction is L-glutamate 5-semialdehyde + phosphate + NADP(+) = L-glutamyl 5-phosphate + NADPH + H(+). The protein operates within amino-acid biosynthesis; L-proline biosynthesis; L-glutamate 5-semialdehyde from L-glutamate: step 2/2. Functionally, catalyzes the NADPH-dependent reduction of L-glutamate 5-phosphate into L-glutamate 5-semialdehyde and phosphate. The product spontaneously undergoes cyclization to form 1-pyrroline-5-carboxylate. This Hydrogenobaculum sp. (strain Y04AAS1) protein is Gamma-glutamyl phosphate reductase.